The chain runs to 100 residues: Small ribosomal subunit protein uS14 (100 aa).

The protein belongs to the universal ribosomal protein uS14 family. Part of the 30S ribosomal subunit. Contacts proteins S3 and S10.

Functionally, binds 16S rRNA, required for the assembly of 30S particles and may also be responsible for determining the conformation of the 16S rRNA at the A site. In Synechococcus sp. (strain RCC307), this protein is Small ribosomal subunit protein uS14.